A 219-amino-acid polypeptide reads, in one-letter code: 2-phospho-L-lactate guanylyltransferase (219 aa).

The protein belongs to the CofC family. As to quaternary structure, homodimer.

The catalysed reaction is (2S)-2-phospholactate + GTP + H(+) = (2S)-lactyl-2-diphospho-5'-guanosine + diphosphate. The protein operates within cofactor biosynthesis; coenzyme F420 biosynthesis. Guanylyltransferase that catalyzes the activation of (2S)-2-phospholactate (2-PL) as (2S)-lactyl-2-diphospho-5'-guanosine, via the condensation of 2-PL with GTP. It is involved in the biosynthesis of coenzyme F420, a hydride carrier cofactor. The sequence is that of 2-phospho-L-lactate guanylyltransferase from Methanocaldococcus vulcanius (strain ATCC 700851 / DSM 12094 / M7) (Methanococcus vulcanius).